The chain runs to 513 residues: Maturase K (513 aa).

It belongs to the intron maturase 2 family. MatK subfamily.

Its subcellular location is the plastid. It is found in the chloroplast. Functionally, usually encoded in the trnK tRNA gene intron. Probably assists in splicing its own and other chloroplast group II introns. This chain is Maturase K, found in Astrebla lappacea (Curly Mitchell grass).